The following is a 150-amino-acid chain: Large ribosomal subunit protein bL9 (150 aa).

It belongs to the bacterial ribosomal protein bL9 family.

Its function is as follows. Binds to the 23S rRNA. The polypeptide is Large ribosomal subunit protein bL9 (Burkholderia ambifaria (strain MC40-6)).